The following is a 581-amino-acid chain: FAD-dependent monooxygenase DEP4 (581 aa).

Residue 43 to 46 (VWSK) coordinates FAD. 54–56 (FAQ) serves as a coordination point for NADP(+). Val108 contacts FAD. NADP(+)-binding positions include 183–202 (VGRS…EGKR), 219–220 (AP), and 351–352 (DI). Met470 serves as a coordination point for FAD.

The protein belongs to the FAD-binding monooxygenase family. FAD serves as cofactor.

Its pathway is polyketide biosynthesis. Its function is as follows. FAD-dependent monooxygenase; part of the gene cluster that mediates the biosynthesis of depudecin, a highly oxidized eleven-carbon linear polyketide that acts as a histone deacetylase (HDAC) inhibitor and makes a small contribution to pathogenesis. The reducing polyketide synthase DEP5 is the central enzyme in depudecin biosynthesis by yielding the backbone polyketide chain. The monooxygenases DEP2 and DEP4, as well as the uncharacterized protein DEP1, then act as tailoring enzymes to modify the intermediate polyketide chain into depudecin. The polypeptide is FAD-dependent monooxygenase DEP4 (Alternaria brassicicola (Dark leaf spot agent)).